Here is a 241-residue protein sequence, read N- to C-terminus: Small ribosomal subunit protein bS6 (241 aa).

Residues Lys97 to Thr108 are compositionally biased toward basic residues. The segment at Lys97–Asn241 is disordered. Residues Pro109–Asn118 show a composition bias toward basic and acidic residues. 2 stretches are compositionally biased toward low complexity: residues Gln130–Gln151 and Asp161–Gly182. The segment covering Arg189 to His202 has biased composition (polar residues).

It belongs to the bacterial ribosomal protein bS6 family.

Binds together with bS18 to 16S ribosomal RNA. This is Small ribosomal subunit protein bS6 from Mesomycoplasma hyopneumoniae (strain 232) (Mycoplasma hyopneumoniae).